Here is a 63-residue protein sequence, read N- to C-terminus: Prokaryotic ubiquitin-like protein Pup (63 aa).

The tract at residues 1–35 (MSGQQSQINAGGGNGQGGDTPEFDAGQVSINSAGT) is disordered. The ARC ATPase binding stretch occupies residues 19-57 (DTPEFDAGQVSINSAGTDDLLDEIDGLLESNAEEFVRSY). Residue Glu63 forms an Isoglutamyl lysine isopeptide (Glu-Lys) (interchain with K-? in acceptor proteins) linkage.

This sequence belongs to the prokaryotic ubiquitin-like protein family. As to quaternary structure, strongly interacts with the proteasome-associated ATPase ARC through a hydrophobic interface; the interacting region of Pup lies in its C-terminal half. There is one Pup binding site per ARC hexamer ring.

Its pathway is protein degradation; proteasomal Pup-dependent pathway. Functionally, protein modifier that is covalently attached to lysine residues of substrate proteins, thereby targeting them for proteasomal degradation. The tagging system is termed pupylation. The chain is Prokaryotic ubiquitin-like protein Pup from Corynebacterium aurimucosum (strain ATCC 700975 / DSM 44827 / CIP 107346 / CN-1) (Corynebacterium nigricans).